Consider the following 93-residue polypeptide: UPF0358 protein ABC2396 (93 aa).

This sequence belongs to the UPF0358 family.

This Shouchella clausii (strain KSM-K16) (Alkalihalobacillus clausii) protein is UPF0358 protein ABC2396.